A 698-amino-acid chain; its full sequence is Trafficking protein particle complex III-specific subunit 85 (698 aa).

Disordered regions lie at residues 82-125 (VGQH…LFQR) and 678-698 (VDSA…SFIG). Positions 678-689 (VDSAPRPSEKNL) are enriched in basic and acidic residues.

It belongs to the TRS85 family. Part of the multisubunit TRAPP (transport protein particle) III complex composed of BET3, BET5, TRS20, TRS23, TRS31, TRS33 and TRS85.

The protein localises to the preautophagosomal structure. Specific subunit of the TRAPP III complex that acts as an autophagy-specific guanine nucleotide exchange factor (GEF) for YPT1. TRS85 directs the TRAPP III complex to the phagophore assembly site (PAS) that is involved in autophagosome formation. Required for membrane expansion during autophagy and the CVT pathway. Required for sporulation. Has a role late in meiosis following DNA replication. The sequence is that of Trafficking protein particle complex III-specific subunit 85 (TRS85) from Saccharomyces cerevisiae (strain ATCC 204508 / S288c) (Baker's yeast).